The following is a 674-amino-acid chain: Transcription activator of gluconeogenesis PMAA_028970 (674 aa).

The segment at 1 to 46 is disordered; sequence MMDTDKDDLPSATDHSEHESGDAVKVEGGASKTASNSKDPSRPRRK. Over residues 14–25 the composition is skewed to basic and acidic residues; sequence DHSEHESGDAVK. A DNA-binding region (zn(2)-C6 fungal-type) is located at residues 52–80; the sequence is CFACQRAHLTCGDERPCQRCIKRGLQDAC. Disordered stretches follow at residues 117 to 181, 250 to 321, 344 to 374, and 519 to 557; these read ISPT…ATPA, TGAG…SGLY, IGSN…SPMK, and NLNV…PGPN. Residues 120-148 show a composition bias toward polar residues; it reads TEYTQNGTNNAQQQQQKSGTIYASSTPSY. Low complexity predominate over residues 149–163; that stretch reads NNNNGTFDTNNATNT. Composition is skewed to polar residues over residues 269–278 and 285–294; these read GQRSNSQQFG and TTESPSQQSF. Low complexity-rich tracts occupy residues 348 to 366 and 529 to 540; these read TFAS…IAPS and NTSSQSDSTSSS.

This sequence belongs to the ERT1/acuK family.

The protein localises to the nucleus. Its function is as follows. Transcription factor which regulates nonfermentable carbon utilization. Activator of gluconeogenetic genes. The polypeptide is Transcription activator of gluconeogenesis PMAA_028970 (Talaromyces marneffei (strain ATCC 18224 / CBS 334.59 / QM 7333) (Penicillium marneffei)).